A 342-amino-acid chain; its full sequence is Alanine racemase (342 aa).

Residue K33 is the Proton acceptor; specific for D-alanine of the active site. K33 carries the post-translational modification N6-(pyridoxal phosphate)lysine. Residue R128 coordinates substrate. Y240 functions as the Proton acceptor; specific for L-alanine in the catalytic mechanism. M288 lines the substrate pocket.

It belongs to the alanine racemase family. It depends on pyridoxal 5'-phosphate as a cofactor.

It catalyses the reaction L-alanine = D-alanine. It functions in the pathway amino-acid biosynthesis; D-alanine biosynthesis; D-alanine from L-alanine: step 1/1. In terms of biological role, catalyzes the interconversion of L-alanine and D-alanine. May also act on other amino acids. This Jannaschia sp. (strain CCS1) protein is Alanine racemase (alr).